A 69-amino-acid polypeptide reads, in one-letter code: Small, acid-soluble spore protein I (69 aa).

Belongs to the SspI family.

It localises to the spore core. The polypeptide is Small, acid-soluble spore protein I (Bacillus anthracis (strain A0248)).